A 597-amino-acid chain; its full sequence is Centrosomal protein of 70 kDa (597 aa).

Positions 1–24 are disordered; it reads MFPVAPKPQDSNQPSDRLMTEKQQ. 2 coiled-coil regions span residues 66 to 179 and 254 to 320; these read MRQN…QTEV and TYKG…QELI. The stretch at 483–516 is one TPR repeat; sequence NGVYPRMNEVYTRLGEMNNAVRNLQELLELDSSS.

Directly interacts with tubulin-gamma; this interaction determines centrosomal localization.

The protein resides in the cytoplasm. The protein localises to the cytoskeleton. Its subcellular location is the microtubule organizing center. It localises to the centrosome. Its function is as follows. Plays a role in the organization of both preexisting and nascent microtubules in interphase cells. During mitosis, required for the organization and orientation of the mitotic spindle. In Macaca fascicularis (Crab-eating macaque), this protein is Centrosomal protein of 70 kDa (CEP70).